Reading from the N-terminus, the 941-residue chain is Zinc finger protein su(Hw) (941 aa).

2 disordered regions span residues 1–97 and 176–211; these read MSAS…APAA and ENNN…NSSQ. Residues 47–57 show a composition bias toward low complexity; it reads STTTTTSRTPS. Residues 185–202 are compositionally biased toward acidic residues; the sequence is VTEDDEDLGEDGDEDGED. T186 carries the phosphothreonine modification. The C2H2-type 1; atypical zinc finger occupies 220 to 242; that stretch reads HVCGKCYKTFRRVQSLKKHLEFC. The C2H2-type 2 zinc finger occupies 290–313; that stretch reads INCPDCPKSFKTQTSYERHIFITH. The C2H2-type 3; atypical zinc finger occupies 319–341; it reads FPCSICNANLRSEALLALHEEQH. 9 C2H2-type zinc fingers span residues 348 to 366, 380 to 402, 413 to 435, 441 to 463, 469 to 491, 497 to 519, 523 to 545, 553 to 577, and 596 to 619; these read YACK…LKRH, MSCK…LKQH, YMCH…IRTH, FDCD…RRYH, YSCT…MKRH, HKCD…SKTH, FPCE…VKTH, FSCA…EGKH, and TDCA…RTVH. The tract at residues 760–860 is interaction with mod(mdg4); that stretch reads ILTEEDIKLK…PIDDVIEYVL (101 aa). Residues 864-941 are disordered; sequence DQDEGGLDKD…KKPVGEQEKA (78 aa). Basic and acidic residues-rich tracts occupy residues 869 to 880 and 891 to 941; these read GLDKDNESHSGD and KTNE…QEKA.

As to quaternary structure, component of the gypsy chromatin insulator complex, composed of Cp190, mod(mdg4) and su(Hw). The gypsy chromatin insulator complex interacts with Topors via mod(mdg4) and su(Hw). Upon ecdysone stimulation, interacts with Nup98.

It localises to the nucleus. The protein localises to the chromosome. Functionally, component of the gypsy chromatin insulator complex which is required for the function of the gypsy chromatin insulator and other endogenous chromatin insulators. Chromatin insulators are regulatory elements which establish independent domains of transcriptional activity within eukaryotic genomes. Insulators have two defining properties; they can block the communication between an enhancer and a promoter when placed between them and can also buffer transgenes from position effect variegation (PEV). Insulators are proposed to structure the chromatin fiber into independent domains of differing transcriptional potential by promoting the formation of distinct chromatin loops. This chromatin looping may involve the formation of insulator bodies, where homotypic interactions between individual subunits of the insulator complex could promote the clustering of widely spaced insulators at the nuclear periphery. Within the gypsy insulator complex, this protein binds specifically to a region of the gypsy element located 3' of the 5' long terminal repeat (LTR), and may also mediate interaction with other endogenous insulators at sites distinct from those recognized by Cp190. Cooperates with pita and cliff to recruit Cp190 and regulate insulator function at the front-ultraabdominal (Fub) boundary. In Drosophila melanogaster (Fruit fly), this protein is Zinc finger protein su(Hw).